The primary structure comprises 144 residues: Ferredoxin-thioredoxin reductase catalytic chain, chloroplastic (144 aa).

Residues 1-31 (MTTQASTFAVAVPSVATPFRRHRNPFVVRAQ) constitute a chloroplast transit peptide. [4Fe-4S] cluster is bound at residue Cys-83. Cys-85 serves as the catalytic Nucleophile. A disulfide bridge connects residues Cys-85 and Cys-115. [4Fe-4S] cluster contacts are provided by Cys-102, Cys-104, and Cys-113.

It belongs to the ferredoxin thioredoxin reductase beta subunit family. Heterodimer of subunit A (variable subunit) and subunit B (catalytic subunit). Heterodimeric FTR forms a complex with ferredoxin and thioredoxin. The cofactor is [4Fe-4S] cluster.

The protein localises to the plastid. It is found in the chloroplast. The catalysed reaction is [thioredoxin]-disulfide + 2 reduced [2Fe-2S]-[ferredoxin] + 2 H(+) = [thioredoxin]-dithiol + 2 oxidized [2Fe-2S]-[ferredoxin]. Catalytic subunit of the ferredoxin-thioredoxin reductase (FTR), which catalyzes the two-electron reduction of thioredoxins by the electrons provided by reduced ferredoxin. This is Ferredoxin-thioredoxin reductase catalytic chain, chloroplastic (FTRC) from Glycine max (Soybean).